Here is a 582-residue protein sequence, read N- to C-terminus: MGRTRPKKLTSKASIPIVREHEIDIIDDEVQNALQQVETGVEKAEESEFHLQAAISATAQGKVNEAHIPTPETVLSNLRYDELYPPIFSQPATYIRFSSTIEDCCGCPYNMTEEDDVFFKIMNEKREPSNRITEDQFEEVMYFFEETAQTKQPFAAVDSPPVLSFAEMQDSMDATVEESVKCFAKDIYEHWKLRRIATGNRPLLPSLKFETGQDTDDTDPYVCFRRREVRQIRKTRGRDAQSADKLRRLRKELEDARQLVALVRQRELARKEMLSMERQIFLQRSEVKEMKRKLNIKDDDEDLINQKVTSIPARLPHAFANLPEQPKKKPAEAPAAQRPTAPQIRMPQKPGTQAADDMQLLEDVQAEKENEILRDIKQNIAKHIKWNEGYVDYTRAPLSPPPEKTFQAAFRPAITTQLPTPPSSDSSDNMMLESALDTANSLSFRDKLVPRTWEMNEDTCRIPSFRRRIGRGGRLMIDRRNMASRCRIEMDPLKADRFKYDREDSDDESEFECDPYDVQIMQHRAIMAAKARDQAAAAAQAHAQAQAQKRLQAEQTTTNNGPPNIGHTMGSNPGPGAVASTS.

Positions 238 to 295 (RDAQSADKLRRLRKELEDARQLVALVRQRELARKEMLSMERQIFLQRSEVKEMKRKLN) form a coiled coil. The tract at residues 323 to 351 (PEQPKKKPAEAPAAQRPTAPQIRMPQKPG) is disordered. Residues 352–385 (TQAADDMQLLEDVQAEKENEILRDIKQNIAKHIK) adopt a coiled-coil conformation. The span at 539–555 (AQAHAQAQAQKRLQAEQ) shows a compositional bias: low complexity. The segment at 539 to 582 (AQAHAQAQAQKRLQAEQTTTNNGPPNIGHTMGSNPGPGAVASTS) is disordered.

This sequence belongs to the enhancer of polycomb family. As to quaternary structure, component of the NuA4 histone acetyltransferase complex.

It is found in the nucleus. Its function is as follows. Component of the NuA4 histone acetyltransferase complex which is involved in transcriptional activation of selected genes principally by acetylation of nucleosomal histone H4 and H2A. The NuA4 complex is also involved in DNA repair. Involved in gene silencing by neighboring heterochromatin, blockage of the silencing spreading along the chromosome, and required for cell cycle progression through G2/M. The sequence is that of Enhancer of polycomb-like protein 1 (epl1) from Aspergillus fumigatus (strain ATCC MYA-4609 / CBS 101355 / FGSC A1100 / Af293) (Neosartorya fumigata).